Reading from the N-terminus, the 88-residue chain is Small ribosomal subunit protein bS20 (88 aa).

Belongs to the bacterial ribosomal protein bS20 family.

In terms of biological role, binds directly to 16S ribosomal RNA. This chain is Small ribosomal subunit protein bS20, found in Methylorubrum populi (strain ATCC BAA-705 / NCIMB 13946 / BJ001) (Methylobacterium populi).